The following is a 25-amino-acid chain: DQSCPWCGFTCCLPNYCQGLTCTVI.

3 disulfide bridges follow: C4–C12, C7–C17, and C11–C22. P5 bears the 4-hydroxyproline mark.

As to expression, expressed by the venom duct.

Its subcellular location is the secreted. In terms of biological role, causes scratching and restlessness in mice. The protein is Conotoxin QcVIA of Conus quercinus (Oak cone).